Consider the following 633-residue polypeptide: 1-deoxy-D-xylulose-5-phosphate synthase 2 (633 aa).

Thiamine diphosphate-binding positions include histidine 73 and 113–115 (SHA). Aspartate 145 is a Mg(2+) binding site. Thiamine diphosphate contacts are provided by residues 146-147 (GA), asparagine 175, tyrosine 286, and glutamate 367. Asparagine 175 is a Mg(2+) binding site.

Belongs to the transketolase family. DXPS subfamily. Homodimer. The cofactor is Mg(2+). Thiamine diphosphate serves as cofactor.

The catalysed reaction is D-glyceraldehyde 3-phosphate + pyruvate + H(+) = 1-deoxy-D-xylulose 5-phosphate + CO2. It participates in metabolic intermediate biosynthesis; 1-deoxy-D-xylulose 5-phosphate biosynthesis; 1-deoxy-D-xylulose 5-phosphate from D-glyceraldehyde 3-phosphate and pyruvate: step 1/1. Catalyzes the acyloin condensation reaction between C atoms 2 and 3 of pyruvate and glyceraldehyde 3-phosphate to yield 1-deoxy-D-xylulose-5-phosphate (DXP). This Kitasatospora griseola (Streptomyces griseolosporeus) protein is 1-deoxy-D-xylulose-5-phosphate synthase 2.